The primary structure comprises 908 residues: Metabotropic glutamate receptor 8 (908 aa).

An N-terminal signal peptide occupies residues 1-33 (MVCEGKRSTSCPCFFLLTAKFYWILTMMQRTHS). At 34 to 583 (QEYAHSIRLD…IIKLEWHSPW (550 aa)) the chain is on the extracellular side. Cys64 and Cys106 form a disulfide bridge. N-linked (GlcNAc...) asparagine glycosylation is present at Asn95. Residues Ser156, 177–179 (AST), and Tyr227 each bind L-glutamate. 7 disulfide bridges follow: Cys246–Cys534, Cys369–Cys384, Cys424–Cys431, Cys516–Cys535, Cys520–Cys538, Cys541–Cys553, and Cys556–Cys569. The N-linked (GlcNAc...) asparagine glycan is linked to Asn298. An L-glutamate-binding site is contributed by Asp309. Lys401 lines the L-glutamate pocket. N-linked (GlcNAc...) asparagine glycosylation is found at Asn452 and Asn480. Asn565 carries an N-linked (GlcNAc...) asparagine glycan. The helical transmembrane segment at 584–608 (AVVPVFIAILGIIATTFVIVTFVRY) threads the bilayer. Topologically, residues 609–620 (NDTPIVRASGRE) are cytoplasmic. Residues 621–641 (LSYVLLTGIFLCYSITFLMIA) form a helical membrane-spanning segment. The Extracellular segment spans residues 642 to 647 (APDTII). A helical membrane pass occupies residues 648–668 (CSFRRIFLGLGMCFSYAALLT). The Cytoplasmic portion of the chain corresponds to 669-695 (KTNRIHRIFEQGKKSVTAPKFISPASQ). A helical membrane pass occupies residues 696–716 (LVITFSLISVQLLGVFVWFVV). Residues 717 to 746 (DPPHTIIDYGEQRTLDPENARGVLKCDISD) are Extracellular-facing. The helical transmembrane segment at 747-768 (LSLICSLGYSILLMVTCTVYAI) threads the bilayer. The Cytoplasmic segment spans residues 769–781 (KTRGVPETFNEAK). A helical transmembrane segment spans residues 782–803 (PIGFTMYTTCIIWLAFIPIFFG). Topologically, residues 804-818 (TAQSAEKMYIQTTTL) are extracellular. The helical transmembrane segment at 819–843 (TVSMSLSASVSLGMLYMPKVYIIIF) threads the bilayer. The Cytoplasmic portion of the chain corresponds to 844 to 908 (HPEQNVQKRK…TYISYSNHSI (65 aa)). Lys882 is covalently cross-linked (Glycyl lysine isopeptide (Lys-Gly) (interchain with G-Cter in SUMO1)).

The protein belongs to the G-protein coupled receptor 3 family. As to quaternary structure, interacts with PICK1. Strongly expressed in olfactory bulb, accessory olfactory bulb, and mammillary body. Weaker expression in the retina, and in scattered cells in the cortex and hindbrain.

It is found in the cell membrane. Its function is as follows. G-protein coupled receptor for glutamate. Ligand binding causes a conformation change that triggers signaling via guanine nucleotide-binding proteins (G proteins) and modulates the activity of down-stream effectors. Signaling inhibits adenylate cyclase activity. The protein is Metabotropic glutamate receptor 8 (Grm8) of Mus musculus (Mouse).